Here is a 450-residue protein sequence, read N- to C-terminus: MGKYFGTDGVRGVANSELTPELAFRLGRMGGYVLTRHVGEHPRVLVARDTRISGEMLESALIAGLVSVGIEVMRLGVISTPGVAYLTKAQGASASVMISASHNPVDDNGIKFFGSDGFKLSDDQEEEIEQLLDTAEDTLPRPSGEGLGTVSDYFEGKQKYIQYLKQTIENDFNGYHIALDCANGATSGLATHLFADLDADISSMGASPNGLNINDGVGSTHPEALAAFVLDKKADVGLAFDGDGDRVIAIDEIGQIVDGDKIMFICAKYLREQGLLNNNTIVSTVMSNLGFYKGLKELEIEDVQTAVGDRYVVEAMREGNYNLGGEQSGHIIFLDHNTTGDGLLSGIQLINVMKATGKKLSELAAEMKTFPQKLENIRVSDKNHVTDNPKVSKVIDEVEAEMAGNGRVLVRPSGTEPLVRVMVEAATKEETDEYCERISAVVRSEMALND.

Ser-101 serves as the catalytic Phosphoserine intermediate. Mg(2+) is bound by residues Ser-101, Asp-241, Asp-243, and Asp-245. Ser-101 is subject to Phosphoserine.

It belongs to the phosphohexose mutase family. The cofactor is Mg(2+). Post-translationally, activated by phosphorylation.

It carries out the reaction alpha-D-glucosamine 1-phosphate = D-glucosamine 6-phosphate. Functionally, catalyzes the conversion of glucosamine-6-phosphate to glucosamine-1-phosphate. This is Phosphoglucosamine mutase from Listeria monocytogenes serovar 1/2a (strain ATCC BAA-679 / EGD-e).